A 45-amino-acid polypeptide reads, in one-letter code: Small polypeptide DEVIL 23 (45 aa).

Residues 13–44 are required for DVL/RTFL small polypeptide activity; it reads KSTLRCWDWCKEQRTRAYIIWRCLIFLLRWDD. A helical membrane pass occupies residues 22–39; sequence CKEQRTRAYIIWRCLIFL.

It belongs to the DVL/RTFL small polypeptides family.

It is found in the cell membrane. Small polypeptide acting as a regulatory molecule which coordinates cellular responses required for differentiation, growth and development, probably by restricting polar cell proliferation in lateral organs and coordinating socket cell recruitment and differentiation at trichome sites. The sequence is that of Small polypeptide DEVIL 23 from Arabidopsis thaliana (Mouse-ear cress).